The primary structure comprises 634 residues: UPF0313 protein PG_0934 (634 aa).

Residues 302–582 form the Radical SAM core domain; the sequence is AYEMIKHSVN…RQHMFFFWYK (281 aa). [4Fe-4S] cluster-binding residues include Cys316, Cys320, and Cys323. The interval 607 to 634 is disordered; the sequence is DRTTSSRNDRHTPPSTQPRKSKSKSRHS. Residues 625–634 are compositionally biased toward basic residues; that stretch reads RKSKSKSRHS.

Belongs to the UPF0313 family. The cofactor is [4Fe-4S] cluster.

The polypeptide is UPF0313 protein PG_0934 (Porphyromonas gingivalis (strain ATCC BAA-308 / W83)).